The sequence spans 392 residues: Adenosine 3'-phospho 5'-phosphosulfate transporter 2 (392 aa).

Residues 11-35 (NINGSASGQQAPTSNSPTLTRKSSS) are disordered. Helical transmembrane passes span 62–82 (CAGV…IFTV), 87–107 (PFGW…GLVE), 136–156 (LVLA…LGYL), 159–179 (PTQV…SILI), 185–205 (GPLD…FTLA), 212–232 (NFNL…AAIG), 249–269 (VVFY…LVTG), 286–306 (FGYG…VLAL), 314–334 (IAAT…FVLF), and 338–358 (FTVQ…LNVY).

Belongs to the nucleotide-sugar transporter family. SLC35B subfamily.

Its subcellular location is the golgi apparatus membrane. Its function is as follows. Mediates the transport of adenosine 3'-phospho 5'-phosphosulfate (PAPS), from cytosol into Golgi. PAPS is a universal sulfuryl donor for sulfation events that take place in the Golgi. Essential for viability. Involved in glycosaminoglycan synthesis and the subsequent signaling. May be involved in hh and dpp signaling by controlling the sulfation of heparan sulfate (HS). This chain is Adenosine 3'-phospho 5'-phosphosulfate transporter 2, found in Drosophila pseudoobscura pseudoobscura (Fruit fly).